Here is a 192-residue protein sequence, read N- to C-terminus: UPF0301 protein Bphyt_0868 (192 aa).

Belongs to the UPF0301 (AlgH) family.

The sequence is that of UPF0301 protein Bphyt_0868 from Paraburkholderia phytofirmans (strain DSM 17436 / LMG 22146 / PsJN) (Burkholderia phytofirmans).